The sequence spans 184 residues: Photosystem I assembly protein Ycf3 (184 aa).

TPR repeat units lie at residues 31–64 (AFAY…DEDQ), 68–101 (SYTL…NSNL), and 131–164 (MEIS…APDN).

Belongs to the Ycf3 family.

It localises to the plastid. Its subcellular location is the chloroplast thylakoid membrane. Essential for the assembly of the photosystem I (PSI) complex. May act as a chaperone-like factor to guide the assembly of the PSI subunits. This chain is Photosystem I assembly protein Ycf3, found in Thalassiosira pseudonana (Marine diatom).